Here is a 240-residue protein sequence, read N- to C-terminus: Phosphoribosylaminoimidazole-succinocarboxamide synthase (240 aa).

The protein belongs to the SAICAR synthetase family.

It carries out the reaction 5-amino-1-(5-phospho-D-ribosyl)imidazole-4-carboxylate + L-aspartate + ATP = (2S)-2-[5-amino-1-(5-phospho-beta-D-ribosyl)imidazole-4-carboxamido]succinate + ADP + phosphate + 2 H(+). It functions in the pathway purine metabolism; IMP biosynthesis via de novo pathway; 5-amino-1-(5-phospho-D-ribosyl)imidazole-4-carboxamide from 5-amino-1-(5-phospho-D-ribosyl)imidazole-4-carboxylate: step 1/2. This is Phosphoribosylaminoimidazole-succinocarboxamide synthase from Anoxybacillus flavithermus (strain DSM 21510 / WK1).